The following is a 119-amino-acid chain: Large ribosomal subunit protein bL19 (119 aa).

It belongs to the bacterial ribosomal protein bL19 family.

This protein is located at the 30S-50S ribosomal subunit interface and may play a role in the structure and function of the aminoacyl-tRNA binding site. In Sulfurovum sp. (strain NBC37-1), this protein is Large ribosomal subunit protein bL19.